A 115-amino-acid polypeptide reads, in one-letter code: uncharacterized protein (115 aa).

Residues 1–115 are disordered; that stretch reads MGETWFLTPN…ARSPERTPSP (115 aa). Residues 7 to 17 are compositionally biased toward polar residues; sequence LTPNGQSSPGS. 2 stretches are compositionally biased toward low complexity: residues 60-70 and 91-107; these read ASCAPRATPRR and SASAPAGPASSAPWPAR.

This is an uncharacterized protein from Human adenovirus C serotype 2 (HAdV-2).